The following is a 428-amino-acid chain: Adenylosuccinate synthetase (428 aa).

GTP contacts are provided by residues G13 to K19 and G41 to T43. D14 functions as the Proton acceptor in the catalytic mechanism. Mg(2+) contacts are provided by D14 and G41. IMP is bound by residues D14–K17, N39–H42, T130, R144, Q223, T238, and R302. The active-site Proton donor is H42. A298 to R304 provides a ligand contact to substrate. Residues R304, K330–D332, and S412–G414 each bind GTP.

It belongs to the adenylosuccinate synthetase family. Homodimer. Requires Mg(2+) as cofactor.

The protein resides in the cytoplasm. The catalysed reaction is IMP + L-aspartate + GTP = N(6)-(1,2-dicarboxyethyl)-AMP + GDP + phosphate + 2 H(+). The protein operates within purine metabolism; AMP biosynthesis via de novo pathway; AMP from IMP: step 1/2. Functionally, plays an important role in the de novo pathway of purine nucleotide biosynthesis. Catalyzes the first committed step in the biosynthesis of AMP from IMP. The sequence is that of Adenylosuccinate synthetase from Dichelobacter nodosus (strain VCS1703A).